The primary structure comprises 160 residues: Coat protein TP3 (160 aa).

It localises to the virion. This is Coat protein TP3 from Thermoproteus tenax (TTV1).